The following is a 257-amino-acid chain: Electron transfer flavoprotein subunit beta (257 aa).

It belongs to the ETF beta-subunit/FixA family. In terms of assembly, heterodimer of an alpha and a beta subunit. FAD is required as a cofactor. Requires AMP as cofactor.

Its function is as follows. The electron transfer flavoprotein serves as a specific electron acceptor for other dehydrogenases. It transfers the electrons to the main respiratory chain via ETF-ubiquinone oxidoreductase (ETF dehydrogenase). The protein is Electron transfer flavoprotein subunit beta (etfB) of Bacillus subtilis (strain 168).